A 150-amino-acid polypeptide reads, in one-letter code: Lipoprotein signal peptidase (150 aa).

A run of 3 helical transmembrane segments spans residues 5–25 (LSLV…NWVV), 59–79 (QQWF…WFLW), and 82–102 (MGQN…LGNF). Residues Asp-113 and Asp-129 contribute to the active site. Residues 124 to 144 (IFNIADILLSVGFVVLFIAIL) form a helical membrane-spanning segment.

Belongs to the peptidase A8 family.

It is found in the cell membrane. The catalysed reaction is Release of signal peptides from bacterial membrane prolipoproteins. Hydrolyzes -Xaa-Yaa-Zaa-|-(S,diacylglyceryl)Cys-, in which Xaa is hydrophobic (preferably Leu), and Yaa (Ala or Ser) and Zaa (Gly or Ala) have small, neutral side chains.. The protein operates within protein modification; lipoprotein biosynthesis (signal peptide cleavage). This protein specifically catalyzes the removal of signal peptides from prolipoproteins. This is Lipoprotein signal peptidase from Lactococcus lactis subsp. cremoris (strain SK11).